Here is a 621-residue protein sequence, read N- to C-terminus: MATNPGLFTEWPWKKLGSFKYVLLAPWVAHGWYEVATKGRREVDLGYIAILPSLLLRMLHNQAWITISRLQNARGRRQIVRRGIEFDQVDRERNWDDQIILSGILLYLGALYVPGGQHLPLWRTDGAGLIALLHAGPVEFLYYWFHRALHHHFLYTRYHSHHHSSIVTEPITSVIHPFAELVAYELLFSIPLIACALTGTASIIAFEMYLIYIDFMNNMGHCNFELVPSWLFTWFPPLKYLMYTPSFHSLHHTQFRTNYSLFMPFYDYIYNTMDKSSDTLYENSLKNNDEEEAVDVVHLTHLTTLHSIYHMRPGFAEFASRPYVSRWYMRMMWPLSWLSMVLTWTYGSSFTVERNVMKKIRMQSWAIPRYSFHYGLDWEKEAINDLIEKAVCEADKNGAKVVSLGLLNQAHTLNKSGEQYLLKYPKLGARIVDGTSLAAAVVVNSIPQGTDQVILAGNVSKVARAVAQALCKKNIKVTMTNKQDYHLLKPEIPETVADNLSFSKTGTAKVWLIGDGLDSAEQFRAQKGTLFIPYSQFPPKMVRKDSCSYSTTPAMAVPKTLQNVHSCENWLPRRVMSAWRIAGILHALEGWNEHECGDKVLDMDKVWSAAIMHGFCPVAQG.

Transmembrane regions (helical) follow at residues 99-119 (IILSGILLYLGALYVPGGQHL), 126-146 (GAGLIALLHAGPVEFLYYWFH), 186-206 (LLFSIPLIACALTGTASIIAF), 224-244 (FELVPSWLFTWFPPLKYLMYT), and 332-352 (MWPLSWLSMVLTWTYGSSFTV). The Fatty acid hydroxylase domain occupies 138–272 (VEFLYYWFHR…MPFYDYIYNT (135 aa)).

It belongs to the sterol desaturase family. As to quaternary structure, homodimer.

The protein resides in the endoplasmic reticulum membrane. It carries out the reaction a long-chain fatty aldehyde + 2 NADPH + O2 + H(+) = a long-chain alkane + formate + 2 NADP(+) + H2O. In terms of biological role, aldehyde decarbonylase involved in the conversion of aldehydes to alkanes. Core component of a very-long-chain alkane synthesis complex. The sequence is that of Very-long-chain aldehyde decarbonylase GL1-5 from Oryza sativa subsp. indica (Rice).